A 42-amino-acid chain; its full sequence is Cytochrome b6-f complex subunit 7 (42 aa).

Residues 15 to 35 (IVTAAVTCIFMVLFGLSLGFA) form a helical membrane-spanning segment.

This sequence belongs to the PetM family. As to quaternary structure, the 4 large subunits of the cytochrome b6-f complex are cytochrome b6, subunit IV (17 kDa polypeptide, PetD), cytochrome f and the Rieske protein, while the 4 small subunits are PetG, PetL, PetM and PetN. The complex functions as a dimer.

It is found in the plastid. The protein localises to the chloroplast thylakoid membrane. Component of the cytochrome b6-f complex, which mediates electron transfer between photosystem II (PSII) and photosystem I (PSI), cyclic electron flow around PSI, and state transitions. The polypeptide is Cytochrome b6-f complex subunit 7 (Trieres chinensis (Marine centric diatom)).